A 190-amino-acid chain; its full sequence is Peptide deformylase (190 aa).

2 residues coordinate Fe cation: Cys94 and His136. Glu137 is a catalytic residue. His140 is a Fe cation binding site.

This sequence belongs to the polypeptide deformylase family. It depends on Fe(2+) as a cofactor.

It catalyses the reaction N-terminal N-formyl-L-methionyl-[peptide] + H2O = N-terminal L-methionyl-[peptide] + formate. In terms of biological role, removes the formyl group from the N-terminal Met of newly synthesized proteins. Requires at least a dipeptide for an efficient rate of reaction. N-terminal L-methionine is a prerequisite for activity but the enzyme has broad specificity at other positions. The chain is Peptide deformylase from Chlorobium luteolum (strain DSM 273 / BCRC 81028 / 2530) (Pelodictyon luteolum).